We begin with the raw amino-acid sequence, 835 residues long: Transcription intermediary factor 1-beta (835 aa).

Over residues 1 to 19 the composition is skewed to low complexity; it reads MAASAAAASAAAASAASGS. Residues 1-49 are disordered; it reads MAASAAAASAAAASAASGSPGPGEGSAGGEKRSTAPSAAASASASAAAS. A2 bears the N-acetylalanine mark. 2 positions are modified to phosphoserine: S19 and S26. A Glycyl lysine isopeptide (Lys-Gly) (interchain with G-Cter in SUMO2) cross-link involves residue K31. Low complexity predominate over residues 35 to 49; that stretch reads APSAAASASASAAAS. S50 is subject to Phosphoserine. The segment at 65–121 adopts an RING-type zinc-finger fold; the sequence is CGVCRERLRPEREPRLLPCLHSACSACLGPAAPAAANSSGDGGAAGDGTVVDCPVCK. Positions 65–376 are RBCC domain; sequence CGVCRERLRP…LIYFQLHRAL (312 aa). Residue K127 forms a Glycyl lysine isopeptide (Lys-Gly) (interchain with G-Cter in SUMO2) linkage. A Phosphoserine modification is found at S138. A B box-type 1; atypical zinc finger spans residues 148–195; that stretch reads DANQCCTSCEDNAPATSYCVECSEPLCETCVEAHQRVKYTKDHTVRST. The Zn(2+) site is built by C153, C156, C177, and H181. K199 participates in a covalent cross-link: Glycyl lysine isopeptide (Lys-Gly) (interchain with G-Cter in SUMO2). Residues 204 to 245 form a B box-type 2 zinc finger; it reads ERTVYCNVHKHEPLVLFCESCDTLTCRDCQLNAHKDHQYQFL. Zn(2+) is bound by residues C209, H212, C232, and H237. Residues 246-376 are leucine zipper alpha helical coiled-coil region; it reads EDAVRNQRKL…LIYFQLHRAL (131 aa). The interval 247 to 376 is interaction with MAGEC2; it reads DAVRNQRKLL…LIYFQLHRAL (130 aa). Residues K254 and K261 each participate in a glycyl lysine isopeptide (Lys-Gly) (interchain with G-Cter in SUMO2) cross-link. Residue K266 is modified to N6-acetyllysine. K272 participates in a covalent cross-link: Glycyl lysine isopeptide (Lys-Gly) (interchain with G-Cter in SUMO2). N6-acetyllysine; alternate is present on K304. A Glycyl lysine isopeptide (Lys-Gly) (interchain with G-Cter in SUMO2); alternate cross-link involves residue K304. K319 participates in a covalent cross-link: Glycyl lysine isopeptide (Lys-Gly) (interchain with G-Cter in SUMO2). N6-acetyllysine is present on K340. K366 is covalently cross-linked (Glycyl lysine isopeptide (Lys-Gly) (interchain with G-Cter in SUMO2)). An involved in binding PPP1CA region spans residues 366–370; it reads KLIYF. N6-acetyllysine; alternate is present on K377. A Glycyl lysine isopeptide (Lys-Gly) (interchain with G-Cter in SUMO2); alternate cross-link involves residue K377. K377 is covalently cross-linked (Glycyl lysine isopeptide (Lys-Gly) (interchain with G-Cter in SUMO1); alternate). A Glycyl lysine isopeptide (Lys-Gly) (interchain with G-Cter in SUMO2) cross-link involves residue K407. Positions 411 to 480 are disordered; sequence ERPGTNSTGP…SRSGEGEVSG (70 aa). S417 carries the phosphoserine modification. K434 is covalently cross-linked (Glycyl lysine isopeptide (Lys-Gly) (interchain with G-Cter in SUMO2)). The segment covering 434 to 443 has biased composition (polar residues); it reads KQGSGSSQPM. A phosphoserine mark is found at S437, S439, and S453. K469 participates in a covalent cross-link: Glycyl lysine isopeptide (Lys-Gly) (interchain with G-Cter in SUMO2); alternate. A Glycyl lysine isopeptide (Lys-Gly) (interchain with G-Cter in SUMO1); alternate cross-link involves residue K469. R470 carries the post-translational modification Citrulline. S471 is modified (phosphoserine). Residue R472 is modified to Citrulline. A phosphoserine mark is found at S473, S479, and S489. Positions 476-513 are HP1 box; that stretch reads GEVSGLMRKVPRVSLERLDLDLTADSQPPVFKVFPGST. The PxVxL motif motif lies at 481–494; sequence LMRKVPRVSLERLD. At T498 the chain carries Phosphothreonine. S501 bears the Phosphoserine mark. Residue K507 forms a Glycyl lysine isopeptide (Lys-Gly) (interchain with G-Cter in SUMO2) linkage. Position 541 is a phosphothreonine (T541). K554 participates in a covalent cross-link: Glycyl lysine isopeptide (Lys-Gly) (interchain with G-Cter in SUMO2); alternate. K554 is covalently cross-linked (Glycyl lysine isopeptide (Lys-Gly) (interchain with G-Cter in SUMO); alternate). A Glycyl lysine isopeptide (Lys-Gly) (interchain with G-Cter in SUMO2) cross-link involves residue K575. The segment at 584–618 is disordered; the sequence is GPGAEGPRLASPSGSTSSGLEVVAPEGTSAPGGGP. Phosphoserine is present on S594. The segment at 625 to 672 adopts a PHD-type zinc-finger fold; the sequence is ATICRVCQKPGDLVMCNQCEFCFHLDCHLPALQDVPGEEWSCSLCHVL. A Glycyl lysine isopeptide (Lys-Gly) (interchain with G-Cter in SUMO) cross-link involves residue K676. S683, S689, and S697 each carry phosphoserine. The 105-residue stretch at 695–799 folds into the Bromo domain; sequence KLSPANQRKC…RFFETRMNEA (105 aa). K750 is covalently cross-linked (Glycyl lysine isopeptide (Lys-Gly) (interchain with G-Cter in SUMO2); alternate). K750 participates in a covalent cross-link: Glycyl lysine isopeptide (Lys-Gly) (interchain with G-Cter in SUMO1); alternate. A Glycyl lysine isopeptide (Lys-Gly) (interchain with G-Cter in SUMO); alternate cross-link involves residue K750. S752 is subject to Phosphoserine. Y755 carries the post-translational modification Phosphotyrosine. At S757 the chain carries Phosphoserine. N6-acetyllysine; alternate occurs at positions 770, 774, and 779. Glycyl lysine isopeptide (Lys-Gly) (interchain with G-Cter in SUMO2); alternate cross-links involve residues K770, K774, and K779. Residue K779 forms a Glycyl lysine isopeptide (Lys-Gly) (interchain with G-Cter in SUMO1); alternate linkage. S784 is modified (phosphoserine). K804 is covalently cross-linked (Glycyl lysine isopeptide (Lys-Gly) (interchain with G-Cter in SUMO2); alternate). Residue K804 forms a Glycyl lysine isopeptide (Lys-Gly) (interchain with G-Cter in SUMO); alternate linkage. Positions 815–835 are disordered; sequence MSLPGAGLSSQELSGGPGDGP. Phosphoserine; by ATM and ATR and dsDNA kinase is present on S824.

Belongs to the TRIM/RBCC family. In terms of assembly, interacts with SETX. Oligomer; the RBCC domain homotrimerizes and interacts with one molecule of KRAB to form the KRAB-KAP1 corepressor complex. Binding to a KRAB domain is an absolute requirement for silencing gene expression. Interacts with CEBPB and NR3C1. Interacts with a number of KRAB-ZFP proteins including ZNF10, ZFP53, ZFP68, ZNF382 and ZNF256. Interacts with NCOR1, NR3C1 and CHD3. Interacts with CEBPB (via the RING-type and PHD-type zinc fingers). Component of a ternary complex that includes TRIM28, a HP1 protein (CBX1, CBX3 OR CBX5), a KRAB domain-containing protein, and DNA. Interacts with CBX5 (via the PxVxL motif); the interaction occurs in interphase nuclei and competes for binding POGZ. Interacts with POGZ; the interaction competes for interaction with CBX5. Interacts with SETDB1; the interaction is enhanced by KAP1 sumoylation, stimulates SETDB1 histone methyltransferase activity and gene silencing. Interacts (via the PHD-type zinc finger) with UBE2I; the interaction is required for sumoylation and repressor activity. Component of the TRIM28/KAP1-ERBB4-MDM2 complex involved in connecting growth factor and DNA damage responses. Interacts directly with ERBB4; the interaction represses ERBB4-mediated transcription activity. Interacts with MDM2; the interaction contributes to p53/TP53 inactivation. Component of the TRIM28/KAP1-MDM2-p53/TP53; involved in regulating p53/TP53 stabilization and activity. Interacts (via the leucine zipper alpha helical coiled-coil) with E2F1 (central region); the interaction inhibits E2F1 acetylation and transcriptional activity. Interacts with PPP1CA; the interaction dephosphorylates TRIM28 at Ser-824 and forms a complex at the p21 promoter site. Interacts with PPP1CB; the interaction is weak but is increased on dephosphorylation at Ser-824. Interacts with FES/FPS. Interacts with SMARCAD1. Interacts with, and sumoylates IRF7. Interacts with MAGEC2. Part of a complex composed of TRIM28, HDAC1, HDAC2 and EHMT2. Interacts with AICDA. Interacts (via the RBCC domain) with KOX1 (via the KRAB domain), ZNF268 (via the KRAB domain) and ZNF300 (via the KRAB domain); the interactions increase KOX1, ZNF268 and ZNF300 nuclear localization activities. The large PER complex involved in the histone methylation is composed of at least PER2, CBX3, TRIM28, SUV39H1 and/or SUV39H2; CBX3 mediates the formation of the complex. Interacts with isoform 2 of ZFP90. Forms a complex with FOXP3 in the presence of isoform 2 of ZFP90. Interacts with NR4A3; the interactions potentiates NR4A3 activity on NurRE promoter. Interacts (unphosphorylated or phosphorylated form) with ZBTB1 (via BTB domain). Probably part of a corepressor complex containing ZNF304, TRIM28, SETDB1 and DNMT1. Interacts with ATRX. Forms a complex with ATRX, SETDB1 and ZNF274. Interacts with ZFP568; the interaction mediates ZFP568 transcriptional repression activity. Interacts with RRP1B. Interacts with CRY1. Interacts with ZNF263; recruited to the SIX3 promoter along with other proteins involved in chromatin modification and transcriptional corepression where it contributes to transcriptional repression. Interacts with CYREN (via XLF motif). Interacts with TRIM17; this interaction prevents TRIM28 activity. Interacts with ZNF746. Interacts with PHF13. Interacts with ZNF354C. Interacts with ZNF432; the interaction is independent of PARP1. As to quaternary structure, (Microbial infection) Interacts with herpes virus 8 protein LANA1; this interaction facilitates establishment of viral latency. Post-translationally, ATM-induced phosphorylation on Ser-824 represses sumoylation leading to the de-repression of expression of a subset of genes involved in cell cycle control and apoptosis in response to genotoxic stress. Dephosphorylation by the phosphatases, PPP1CA and PP1CB forms, allows sumoylation and expression of TRIM28 target genes. In terms of processing, sumoylation/desumoylation events regulate TRIM28-mediated transcriptional repression. Sumoylation is required for interaction with CHD3 and SETDB1 and the corepressor activity. Represses and is repressed by Ser-824 phosphorylation. Enhances the TRIM28 corepressor activity, inhibiting transcriptional activity of a number of genes including GADD45A and CDKN1A/p21. Lys-554, Lys-779 and Lys-804 are the major sites of sumoylation. In response to Dox-induced DNA damage, enhanced phosphorylation on Ser-824 prevents sumoylation and allows de-repression of CDKN1A/p21. Auto-ubiquitinated; enhanced by MAGEA2 and MAGEC2. Post-translationally, citrullinated by PADI4. In terms of processing, ADP-ribosylated by SIRT6, promoting TRIM28/KAP1 interaction with CBX5, thereby contributing to the packaging of LINE-1 retrotransposon elements into transcriptionally repressive heterochromatin. As to expression, expressed in all tissues tested including spleen, thymus, prostate, testis, ovary, small intestine, colon and peripheral blood leukocytes.

The protein localises to the nucleus. The enzyme catalyses S-ubiquitinyl-[E2 ubiquitin-conjugating enzyme]-L-cysteine + [acceptor protein]-L-lysine = [E2 ubiquitin-conjugating enzyme]-L-cysteine + N(6)-ubiquitinyl-[acceptor protein]-L-lysine.. It participates in protein modification; protein sumoylation. In terms of biological role, nuclear corepressor for KRAB domain-containing zinc finger proteins (KRAB-ZFPs). Mediates gene silencing by recruiting CHD3, a subunit of the nucleosome remodeling and deacetylation (NuRD) complex, and SETDB1 (which specifically methylates histone H3 at 'Lys-9' (H3K9me)) to the promoter regions of KRAB target genes. Enhances transcriptional repression by coordinating the increase in H3K9me, the decrease in histone H3 'Lys-9 and 'Lys-14' acetylation (H3K9ac and H3K14ac, respectively) and the disposition of HP1 proteins to silence gene expression. Recruitment of SETDB1 induces heterochromatinization. May play a role as a coactivator for CEBPB and NR3C1 in the transcriptional activation of ORM1. Also a corepressor for ERBB4. Inhibits E2F1 activity by stimulating E2F1-HDAC1 complex formation and inhibiting E2F1 acetylation. May serve as a partial backup to prevent E2F1-mediated apoptosis in the absence of RB1. Important regulator of CDKN1A/p21(CIP1). Has E3 SUMO-protein ligase activity toward itself via its PHD-type zinc finger. Also specifically sumoylates IRF7, thereby inhibiting its transactivation activity. Ubiquitinates p53/TP53 leading to its proteasomal degradation; the function is enhanced by MAGEC2 and MAGEA2, and possibly MAGEA3 and MAGEA6. Mediates the nuclear localization of KOX1, ZNF268 and ZNF300 transcription factors. In association with isoform 2 of ZFP90, is required for the transcriptional repressor activity of FOXP3 and the suppressive function of regulatory T-cells (Treg). Probably forms a corepressor complex required for activated KRAS-mediated promoter hypermethylation and transcriptional silencing of tumor suppressor genes (TSGs) or other tumor-related genes in colorectal cancer (CRC) cells. Required to maintain a transcriptionally repressive state of genes in undifferentiated embryonic stem cells (ESCs). In ESCs, in collaboration with SETDB1, is also required for H3K9me3 and silencing of endogenous and introduced retroviruses in a DNA-methylation independent-pathway. Associates at promoter regions of tumor suppressor genes (TSGs) leading to their gene silencing. The SETDB1-TRIM28-ZNF274 complex may play a role in recruiting ATRX to the 3'-exons of zinc-finger coding genes with atypical chromatin signatures to establish or maintain/protect H3K9me3 at these transcriptionally active regions. Its function is as follows. (Microbial infection) Plays a critical role in the shutdown of lytic gene expression during the early stage of herpes virus 8 primary infection. This inhibition is mediated through interaction with herpes virus 8 protein LANA1. This chain is Transcription intermediary factor 1-beta, found in Homo sapiens (Human).